We begin with the raw amino-acid sequence, 155 residues long: Transcriptional repressor NrdR (155 aa).

Residues 1–10 (MQCPHCHHNS) show a composition bias toward basic residues. The disordered stretch occupies residues 1–21 (MQCPHCHHNSSRVVDSRPTDG). The segment at 3–34 (CPHCHHNSSRVVDSRPTDGGRAIRRRRECENC) is a zinc-finger region. The region spanning 49 to 139 (LLVIKKNGTR…VYRQFKDMSV (91 aa)) is the ATP-cone domain.

It belongs to the NrdR family. Zn(2+) is required as a cofactor.

Negatively regulates transcription of bacterial ribonucleotide reductase nrd genes and operons by binding to NrdR-boxes. The chain is Transcriptional repressor NrdR from Lacticaseibacillus casei (strain BL23) (Lactobacillus casei).